Consider the following 165-residue polypeptide: Transcription factor TCP16 (165 aa).

A compositionally biased stretch (polar residues) spans 1–11; that stretch reads MDSKNGINNSQ. Disordered regions lie at residues 1–21 and 146–165; these read MDSKNGINNSQKARRTPKDRH and GNATASDTTSAATTTATTTV. Residues 12 to 21 show a composition bias toward basic residues; the sequence is KARRTPKDRH. The TCP domain maps to 17–71; sequence PKDRHLKIGGRDRRIRIPPSVAPQLFRLTKELGFKTDGETVSWLLQNAEPAIFAA. The segment covering 148–165 has biased composition (low complexity); that stretch reads ATASDTTSAATTTATTTV.

In terms of tissue distribution, mostly in anther in young buds.

It is found in the nucleus. Required during early processes in pollen development. The chain is Transcription factor TCP16 (TCP16) from Arabidopsis thaliana (Mouse-ear cress).